Reading from the N-terminus, the 430-residue chain is Tryptophan synthase beta chain (430 aa).

Lys95 carries the N6-(pyridoxal phosphate)lysine modification.

This sequence belongs to the TrpB family. In terms of assembly, tetramer of two alpha and two beta chains. It depends on pyridoxal 5'-phosphate as a cofactor.

The catalysed reaction is (1S,2R)-1-C-(indol-3-yl)glycerol 3-phosphate + L-serine = D-glyceraldehyde 3-phosphate + L-tryptophan + H2O. It participates in amino-acid biosynthesis; L-tryptophan biosynthesis; L-tryptophan from chorismate: step 5/5. The beta subunit is responsible for the synthesis of L-tryptophan from indole and L-serine. This Halobacterium salinarum (strain ATCC 29341 / DSM 671 / R1) protein is Tryptophan synthase beta chain.